The chain runs to 311 residues: MAKDFQDIQQLSSEENDHPFHQGEGPGTRRLNPRRGNPFLKGPPPAQPLAQRLCSMVCFSLLALSFNILLLVVICVTGSQSEGHGGAQLQAELRSLKEAFSNFSSSTLTEVQAISTHGGSVGDKITSLGAKLEKQQQDLKADHDALLFHLKHFPVDLRFVACQMELLHSNGSQRTCCPVNWVEHQGSCYWFSHSGKAWAEAEKYCQLENAHLVVINSWEEQKFIVQHTNPFNTWIGLTDSDGSWKWVDGTDYRHNYKNWAVTQPDNWHGHELGGSEDCVEVQPDGRWNDDFCLQVYRWVCEKRRNATGEVA.

Residues 1–44 (MAKDFQDIQQLSSEENDHPFHQGEGPGTRRLNPRRGNPFLKGPP) form a disordered region. At 1–58 (MAKDFQDIQQLSSEENDHPFHQGEGPGTRRLNPRRGNPFLKGPPPAQPLAQRLCSMVC) the chain is on the cytoplasmic side. Residues 5–8 (FQDI) carry the Endocytosis signal motif. Ser13 is subject to Phosphoserine. Cys54 is lipidated: S-palmitoyl cysteine. The helical; Signal-anchor for type II membrane protein transmembrane segment at 59–79 (FSLLALSFNILLLVVICVTGS) threads the bilayer. Residues 80-311 (QSEGHGGAQL…KRRNATGEVA (232 aa)) are Extracellular-facing. N-linked (GlcNAc...) asparagine glycans are attached at residues Asn102 and Asn170. The C-type lectin domain occupies 176–302 (CCPVNWVEHQ…LQVYRWVCEK (127 aa)). Disulfide bonds link Cys177/Cys188, Cys205/Cys300, and Cys278/Cys292. The N-linked (GlcNAc...) asparagine glycan is linked to Asn305.

The functioning ligand-binding unit of this receptor is thought to be at least a dimer. Interacts with LASS2. As to quaternary structure, (Microbial infection) Interacts with hepatitis E virus capsid protein ORF2. As to expression, expressed exclusively in hepatic parenchymal cells.

It localises to the membrane. Mediates the endocytosis of plasma glycoproteins to which the terminal sialic acid residue on their complex carbohydrate moieties has been removed. The receptor recognizes terminal galactose and N-acetylgalactosamine units. After ligand binding to the receptor, the resulting complex is internalized and transported to a sorting organelle, where receptor and ligand are disassociated. The receptor then returns to the cell membrane surface. The protein is Asialoglycoprotein receptor 2 (ASGR2) of Homo sapiens (Human).